The following is a 685-amino-acid chain: Probable cysteine desulfurase (685 aa).

The segment at 1-282 is cargo-loading domain; sequence MTRSPCSTTS…RDEHEVFDVA (282 aa). Disordered regions lie at residues 48 to 135 and 162 to 185; these read SIRP…TSAG and PTPA…VPDT. Residues 71–85 show a composition bias toward low complexity; it reads ATAATSAGRTAAGTA. Residues 102–121 show a composition bias toward pro residues; that stretch reads LPPPASPAPEAPPQAAPPAP. A compositionally biased stretch (low complexity) spans 122–135; that stretch reads RGSAPDATAATSAG. Residues 164–178 are compositionally biased toward pro residues; the sequence is PAGPEAPPQSAPPAP. Residue lysine 502 is modified to N6-(pyridoxal phosphate)lysine. Catalysis depends on cysteine 640, which acts as the Cysteine persulfide intermediate.

This sequence belongs to the class-V pyridoxal-phosphate-dependent aminotransferase family. Csd subfamily. As to quaternary structure, isolated from bacteria in a complex with encapsulin 2A (AC I3NID5), strongly suggesting it is found in a type 2A encapsulin nanocompartment. There are 1-2 copies of this protein in each encapsulin shell. Pyridoxal 5'-phosphate serves as cofactor.

The protein localises to the encapsulin nanocompartment. Its subcellular location is the cell membrane. It catalyses the reaction (sulfur carrier)-H + L-cysteine = (sulfur carrier)-SH + L-alanine. In terms of biological role, cargo protein of a type 2A encapsulin nanocompartment involved in sulfur metabolism. Cysteine desulfurases mobilize the sulfur from L-cysteine to yield L-alanine, an essential step in sulfur metabolism for biosynthesis of a variety of sulfur-containing biomolecules. This is Probable cysteine desulfurase from Mycolicibacterium paratuberculosis (strain ATCC BAA-968 / K-10) (Mycobacterium paratuberculosis).